Here is a 206-residue protein sequence, read N- to C-terminus: Large ribosomal subunit protein uL4 (206 aa).

The interval 48-97 (THAVKNRSLVSGGGKKPWKQKHTGRARQGSTRASQWVGGGKAMGPKPRDY) is disordered. A compositionally biased stretch (basic residues) spans 63–72 (KPWKQKHTGR).

The protein belongs to the universal ribosomal protein uL4 family. Part of the 50S ribosomal subunit.

Its function is as follows. One of the primary rRNA binding proteins, this protein initially binds near the 5'-end of the 23S rRNA. It is important during the early stages of 50S assembly. It makes multiple contacts with different domains of the 23S rRNA in the assembled 50S subunit and ribosome. In terms of biological role, forms part of the polypeptide exit tunnel. This is Large ribosomal subunit protein uL4 from Anaeromyxobacter dehalogenans (strain 2CP-1 / ATCC BAA-258).